Consider the following 96-residue polypeptide: Dynein light chain roadblock-type 1 (96 aa).

Alanine 2 carries the N-acetylalanine modification.

Belongs to the GAMAD family. In terms of assembly, homodimer. The cytoplasmic dynein 1 complex consists of two catalytic heavy chains (HCs) and a number of non-catalytic subunits presented by intermediate chains (ICs), light intermediate chains (LICs) and light chains (LCs); the composition seems to vary in respect to the IC, LIC and LC composition. The heavy chain homodimer serves as a scaffold for the probable homodimeric assembly of the respective non-catalytic subunits. The ICs and LICs bind directly to the HC dimer and the LCs assemble on the IC dimer. Interacts with DYNLRB2. Interacts with DYNC1I1 and DYNC1I2. Interacts with RAB6A isoform 1 (GTP-bound); the interaction is direct. Interacts with RAB6A isoform 2 (GDP-bound); the interaction is direct. Interacts with RAB6B (GDP-bound). In terms of tissue distribution, high expression in heart, liver, brain and pancreas; moderate in placenta, skeletal muscle and kidney; low in lung, prostate, testis, small intestine and colon. Isoform 1 expression is up-regulated in 64% hepatocellular carcinoma (HCC) patients.

Its subcellular location is the cytoplasm. It is found in the cytoskeleton. Acts as one of several non-catalytic accessory components of the cytoplasmic dynein 1 complex that are thought to be involved in linking dynein to cargos and to adapter proteins that regulate dynein function. Cytoplasmic dynein 1 acts as a motor for the intracellular retrograde motility of vesicles and organelles along microtubules. This Homo sapiens (Human) protein is Dynein light chain roadblock-type 1.